Reading from the N-terminus, the 486-residue chain is FAD-dependent oxidoreductase domain-containing protein 1 (486 aa).

A helical transmembrane segment spans residues 66–86 (VVVVGGGVLGLSVAYWLKQLE).

In terms of assembly, associates with components of the mitochondrial respiratory chain complex I. It depends on FAD as a cofactor.

The protein localises to the mitochondrion inner membrane. Functionally, required for the assembly of the mitochondrial membrane respiratory chain NADH dehydrogenase (Complex I). Involved in mid-late stages of complex I assembly. The protein is FAD-dependent oxidoreductase domain-containing protein 1 (FOXRED1) of Macaca fascicularis (Crab-eating macaque).